We begin with the raw amino-acid sequence, 317 residues long: tRNA dimethylallyltransferase (317 aa).

Residue 14 to 21 (GPTAVGKT) coordinates ATP. 16–21 (TAVGKT) contacts substrate. Positions 39–42 (DSMQ) are interaction with substrate tRNA.

Belongs to the IPP transferase family. As to quaternary structure, monomer. It depends on Mg(2+) as a cofactor.

The enzyme catalyses adenosine(37) in tRNA + dimethylallyl diphosphate = N(6)-dimethylallyladenosine(37) in tRNA + diphosphate. In terms of biological role, catalyzes the transfer of a dimethylallyl group onto the adenine at position 37 in tRNAs that read codons beginning with uridine, leading to the formation of N6-(dimethylallyl)adenosine (i(6)A). In Bacillus cereus (strain B4264), this protein is tRNA dimethylallyltransferase.